Reading from the N-terminus, the 343-residue chain is Dual-specificity RNA methyltransferase RlmN (343 aa).

E92 (proton acceptor) is an active-site residue. One can recognise a Radical SAM core domain in the interval 98–325 (DEDRTTLCIS…VITRSSRGSD (228 aa)). A disulfide bridge connects residues C105 and C330. Residues C112, C116, and C119 each contribute to the [4Fe-4S] cluster site. S-adenosyl-L-methionine contacts are provided by residues 157–158 (GE), S189, 211–213 (SLN), and N287. C330 functions as the S-methylcysteine intermediate in the catalytic mechanism.

The protein belongs to the radical SAM superfamily. RlmN family. [4Fe-4S] cluster serves as cofactor.

It localises to the cytoplasm. It carries out the reaction adenosine(2503) in 23S rRNA + 2 reduced [2Fe-2S]-[ferredoxin] + 2 S-adenosyl-L-methionine = 2-methyladenosine(2503) in 23S rRNA + 5'-deoxyadenosine + L-methionine + 2 oxidized [2Fe-2S]-[ferredoxin] + S-adenosyl-L-homocysteine. It catalyses the reaction adenosine(37) in tRNA + 2 reduced [2Fe-2S]-[ferredoxin] + 2 S-adenosyl-L-methionine = 2-methyladenosine(37) in tRNA + 5'-deoxyadenosine + L-methionine + 2 oxidized [2Fe-2S]-[ferredoxin] + S-adenosyl-L-homocysteine. Its function is as follows. Specifically methylates position 2 of adenine 2503 in 23S rRNA and position 2 of adenine 37 in tRNAs. m2A2503 modification seems to play a crucial role in the proofreading step occurring at the peptidyl transferase center and thus would serve to optimize ribosomal fidelity. This chain is Dual-specificity RNA methyltransferase RlmN, found in Geotalea uraniireducens (strain Rf4) (Geobacter uraniireducens).